Reading from the N-terminus, the 412-residue chain is Probable cystathionine gamma-synthase 2 (412 aa).

Residues Y76, R78, G106, M107, Y131, S226, and T228 each contribute to the pyridoxal 5'-phosphate site. The residue at position 229 (K229) is an N6-(pyridoxal phosphate)lysine.

This sequence belongs to the trans-sulfuration enzymes family. It depends on pyridoxal 5'-phosphate as a cofactor.

The catalysed reaction is O-phospho-L-homoserine + L-cysteine = L,L-cystathionine + phosphate. It carries out the reaction O-succinyl-L-homoserine + L-cysteine = L,L-cystathionine + succinate + H(+). Its pathway is amino-acid biosynthesis; L-methionine biosynthesis via de novo pathway; L-cystathionine from O-succinyl-L-homoserine: step 1/1. Its function is as follows. Catalyzes the first committed step of methionine (Met) biosynthesis. Catalyzes the formation of L-cystathionine from homoserine esters and L-cysteine, via a gamma-replacement reaction. This Arabidopsis thaliana (Mouse-ear cress) protein is Probable cystathionine gamma-synthase 2.